Consider the following 473-residue polypeptide: Cell division protein FtsP (473 aa).

The segment at residues 1–27 (MSFSRRQFLQASGLAVCLGSLSSSVRA) is a signal peptide (tat-type signal).

It belongs to the FtsP family. Predicted to be exported by the Tat system. The position of the signal peptide cleavage has not been experimentally proven.

The protein localises to the periplasm. Cell division protein that is required for growth during stress conditions. May be involved in protecting or stabilizing the divisomal assembly under conditions of stress. This chain is Cell division protein FtsP, found in Proteus mirabilis (strain HI4320).